Reading from the N-terminus, the 440-residue chain is Thymidine phosphorylase (440 aa).

This sequence belongs to the thymidine/pyrimidine-nucleoside phosphorylase family. In terms of assembly, homodimer.

It catalyses the reaction thymidine + phosphate = 2-deoxy-alpha-D-ribose 1-phosphate + thymine. It functions in the pathway pyrimidine metabolism; dTMP biosynthesis via salvage pathway; dTMP from thymine: step 1/2. In terms of biological role, the enzymes which catalyze the reversible phosphorolysis of pyrimidine nucleosides are involved in the degradation of these compounds and in their utilization as carbon and energy sources, or in the rescue of pyrimidine bases for nucleotide synthesis. The protein is Thymidine phosphorylase of Salmonella heidelberg (strain SL476).